A 689-amino-acid chain; its full sequence is Glycine--tRNA ligase beta subunit (689 aa).

It belongs to the class-II aminoacyl-tRNA synthetase family. Tetramer of two alpha and two beta subunits.

The protein localises to the cytoplasm. It catalyses the reaction tRNA(Gly) + glycine + ATP = glycyl-tRNA(Gly) + AMP + diphosphate. In Shewanella baltica (strain OS155 / ATCC BAA-1091), this protein is Glycine--tRNA ligase beta subunit.